The following is a 619-amino-acid chain: Manganese lipoxygenase (619 aa).

A signal peptide spans Met-1–Ala-16. Asn-32, Asn-42, Asn-62, Asn-86, Asn-164, and Asn-229 each carry an N-linked (GlcNAc...) asparagine glycan. In terms of domain architecture, Lipoxygenase spans Thr-55 to Val-619. Mn(2+) contacts are provided by His-298, His-303, His-483, and Asn-487. Asn-515 and Asn-549 each carry an N-linked (GlcNAc...) asparagine glycan. Val-619 contributes to the Mn(2+) binding site.

Belongs to the lipoxygenase family. Manganese lipoxygenase subfamily. Requires Mn(2+) as cofactor.

It is found in the secreted. It carries out the reaction (9Z,12Z)-octadecadienoate + O2 = (9S)-hydroperoxy-(10E,12Z)-octadecadienoate. The enzyme catalyses (9Z,12Z)-octadecadienoate + O2 = (11S)-hydroperoxy-(9Z,12Z)-octadecadienoate. It catalyses the reaction (9Z,12Z)-octadecadienoate + O2 = (13R)-hydroperoxy-(9Z,11E)-octadecadienoate. The catalysed reaction is (9Z,12Z,15Z)-octadecatrienoate + O2 = (9S)-hydroperoxy-(10E,12Z,15Z)-octadecatrienoate. It carries out the reaction (9Z,12Z,15Z)-octadecatrienoate + O2 = (11R)-hydroperoxy-(9Z,12Z,15Z)-octadecatrienoate. The enzyme catalyses (9Z,12Z,15Z)-octadecatrienoate + O2 = (13R)-hydroperoxy-(9Z,11E,15Z)-octadecatrienoate. It catalyses the reaction (9S)-hydroperoxy-(10E,12Z,15Z)-octadecatrienoate + O2 = (9S,16S)-dihydroperoxy-(10E,12Z,14E)-octadecatrienoate. Functionally, lipoxygenase that metabolizes linoleic and alpha-linolenic acids to 9S-, 11- and 13R-hydroperoxy fatty acids. At the end of lipoxygenation, the intermediate product 11S-HPODE from linoleic acid is then transformed into 9S-HPODE and 13R-HPODE as the final products. The intermediate product 11R-HPOTrE from alpha-linolenic acid is transformed into 9S-HPOTrE and 13R-HPOTrE as the final products. 9S-HPOTrE is further oxidized by the enzyme to 9S,16S-DiHPOTrE as the end product. This chain is Manganese lipoxygenase, found in Pyricularia oryzae (strain 70-15 / ATCC MYA-4617 / FGSC 8958) (Rice blast fungus).